Reading from the N-terminus, the 218-residue chain is N-(5'-phosphoribosyl)anthranilate isomerase (218 aa).

It belongs to the TrpF family.

It carries out the reaction N-(5-phospho-beta-D-ribosyl)anthranilate = 1-(2-carboxyphenylamino)-1-deoxy-D-ribulose 5-phosphate. It functions in the pathway amino-acid biosynthesis; L-tryptophan biosynthesis; L-tryptophan from chorismate: step 3/5. In Chelativorans sp. (strain BNC1), this protein is N-(5'-phosphoribosyl)anthranilate isomerase.